Here is a 61-residue protein sequence, read N- to C-terminus: Tryptophyllin-T1 (61 aa).

An N-terminal signal peptide occupies residues 1–22 (MDFLKKSLFLVLFLGLVSISLC). Residues 23-53 (DEEKRQDDDEASEREEKKEIHEEGNQEERRD) constitute a propeptide that is removed on maturation. The interval 25–61 (EKRQDDDEASEREEKKEIHEEGNQEERRDRPPSWIPK) is disordered. A compositionally biased stretch (basic and acidic residues) spans 36 to 55 (REEKKEIHEEGNQEERRDRP). The residue at position 56 (Pro56) is a 4-hydroxyproline; partial.

It belongs to the frog skin active peptide (FSAP) family. Tryptophillin subfamily. Expressed by the skin glands.

The protein localises to the secreted. This is Tryptophyllin-T1 from Pithecopus azureus (Orange-legged monkey tree frog).